The primary structure comprises 224 residues: ATP-dependent dethiobiotin synthetase BioD (224 aa).

14–19 provides a ligand contact to ATP; the sequence is GIGKTV. Thr-18 is a Mg(2+) binding site. Residue Lys-39 is part of the active site. Ser-43 provides a ligand contact to substrate. Residues Asp-56, 117–120, and 177–178 contribute to the ATP site; these read EGVG and NE. Residues Asp-56 and Glu-117 each coordinate Mg(2+).

It belongs to the dethiobiotin synthetase family. Homodimer. Mg(2+) is required as a cofactor.

The protein resides in the cytoplasm. The catalysed reaction is (7R,8S)-7,8-diammoniononanoate + CO2 + ATP = (4R,5S)-dethiobiotin + ADP + phosphate + 3 H(+). The protein operates within cofactor biosynthesis; biotin biosynthesis; biotin from 7,8-diaminononanoate: step 1/2. Its function is as follows. Catalyzes a mechanistically unusual reaction, the ATP-dependent insertion of CO2 between the N7 and N8 nitrogen atoms of 7,8-diaminopelargonic acid (DAPA, also called 7,8-diammoniononanoate) to form a ureido ring. The protein is ATP-dependent dethiobiotin synthetase BioD of Xanthomonas campestris pv. campestris (strain 8004).